Consider the following 163-residue polypeptide: Shikimate kinase (163 aa).

10–15 (GVGKTT) lines the ATP pocket. Threonine 14 contributes to the Mg(2+) binding site. Substrate-binding residues include aspartate 28, arginine 52, and glycine 75. Arginine 116 provides a ligand contact to ATP. Arginine 134 contributes to the substrate binding site.

Belongs to the shikimate kinase family. In terms of assembly, monomer. Mg(2+) is required as a cofactor.

The protein resides in the cytoplasm. It catalyses the reaction shikimate + ATP = 3-phosphoshikimate + ADP + H(+). Its pathway is metabolic intermediate biosynthesis; chorismate biosynthesis; chorismate from D-erythrose 4-phosphate and phosphoenolpyruvate: step 5/7. Its function is as follows. Catalyzes the specific phosphorylation of the 3-hydroxyl group of shikimic acid using ATP as a cosubstrate. The sequence is that of Shikimate kinase from Streptococcus suis (strain 98HAH33).